The primary structure comprises 250 residues: Hydroxyethylthiazole kinase (250 aa).

M39 contacts substrate. 2 residues coordinate ATP: R114 and T159. Residue G186 coordinates substrate.

Belongs to the Thz kinase family. Mg(2+) serves as cofactor.

It catalyses the reaction 5-(2-hydroxyethyl)-4-methylthiazole + ATP = 4-methyl-5-(2-phosphooxyethyl)-thiazole + ADP + H(+). It functions in the pathway cofactor biosynthesis; thiamine diphosphate biosynthesis; 4-methyl-5-(2-phosphoethyl)-thiazole from 5-(2-hydroxyethyl)-4-methylthiazole: step 1/1. Functionally, catalyzes the phosphorylation of the hydroxyl group of 4-methyl-5-beta-hydroxyethylthiazole (THZ). This Lactococcus lactis subsp. cremoris (strain SK11) protein is Hydroxyethylthiazole kinase.